Consider the following 146-residue polypeptide: METLTAISRWLAKQHVVTWCVQHEGELWCANAFYLFDAQKVAFYVLTEEKTRHAQMSGPRAPVAGTVNGQPKTVARIRGIQFKGEIRKLEGEESDAARQAYLRRFPVARMLPAPVWEIRLDEIKFTDNTLGFGKKMHWLRSPIRSL.

This sequence belongs to the UPF0306 family.

In Citrobacter koseri (strain ATCC BAA-895 / CDC 4225-83 / SGSC4696), this protein is UPF0306 protein CKO_04548.